A 294-amino-acid polypeptide reads, in one-letter code: 4-hydroxy-tetrahydrodipicolinate synthase (294 aa).

Thr-47 is a pyruvate binding site. The Proton donor/acceptor role is filled by Tyr-136. Lys-164 (schiff-base intermediate with substrate) is an active-site residue. Val-206 lines the pyruvate pocket.

It belongs to the DapA family. Homotetramer; dimer of dimers.

The protein localises to the cytoplasm. It catalyses the reaction L-aspartate 4-semialdehyde + pyruvate = (2S,4S)-4-hydroxy-2,3,4,5-tetrahydrodipicolinate + H2O + H(+). It functions in the pathway amino-acid biosynthesis; L-lysine biosynthesis via DAP pathway; (S)-tetrahydrodipicolinate from L-aspartate: step 3/4. Functionally, catalyzes the condensation of (S)-aspartate-beta-semialdehyde [(S)-ASA] and pyruvate to 4-hydroxy-tetrahydrodipicolinate (HTPA). This is 4-hydroxy-tetrahydrodipicolinate synthase from Cyanothece sp. (strain PCC 7425 / ATCC 29141).